A 955-amino-acid polypeptide reads, in one-letter code: 2-oxoglutarate dehydrogenase E1 component (955 aa).

Belongs to the alpha-ketoglutarate dehydrogenase family. As to quaternary structure, homodimer. Part of the 2-oxoglutarate dehydrogenase (OGDH) complex composed of E1 (2-oxoglutarate dehydrogenase), E2 (dihydrolipoamide succinyltransferase) and E3 (dihydrolipoamide dehydrogenase); the complex contains multiple copies of the three enzymatic components (E1, E2 and E3). The cofactor is thiamine diphosphate.

The catalysed reaction is N(6)-[(R)-lipoyl]-L-lysyl-[protein] + 2-oxoglutarate + H(+) = N(6)-[(R)-S(8)-succinyldihydrolipoyl]-L-lysyl-[protein] + CO2. In terms of biological role, E1 component of the 2-oxoglutarate dehydrogenase (OGDH) complex which catalyzes the decarboxylation of 2-oxoglutarate, the first step in the conversion of 2-oxoglutarate to succinyl-CoA and CO(2). The sequence is that of 2-oxoglutarate dehydrogenase E1 component from Bacillus mycoides (strain KBAB4) (Bacillus weihenstephanensis).